We begin with the raw amino-acid sequence, 406 residues long: Putative colanic acid biosynthesis glycosyltransferase WcaL (406 aa).

Belongs to the glycosyltransferase group 1 family. Glycosyltransferase 4 subfamily.

It functions in the pathway slime biogenesis; slime polysaccharide biosynthesis. This Salmonella typhimurium (strain LT2 / SGSC1412 / ATCC 700720) protein is Putative colanic acid biosynthesis glycosyltransferase WcaL (wcaL).